The following is a 182-amino-acid chain: Pyruvate synthase subunit PorC (182 aa).

Heterotetramer of one alpha, one beta, one delta and one gamma chain.

The enzyme catalyses 2 oxidized [2Fe-2S]-[ferredoxin] + pyruvate + CoA = 2 reduced [2Fe-2S]-[ferredoxin] + acetyl-CoA + CO2 + H(+). This Methanosarcina barkeri (strain Fusaro / DSM 804) protein is Pyruvate synthase subunit PorC (porC).